The primary structure comprises 128 residues: Cholecystokinin B (128 aa).

Positions 1–20 (MCSGVCICLLLAMLSASSKA) are cleaved as a signal peptide. Residues 21 to 108 (HQATGSLGED…FDQSHRINDR (88 aa)) constitute a propeptide that is removed on maturation. Residues 47–67 (YARASSAGQKKSFQRTDGDQR) form a disordered region. Tyr110 is modified (sulfotyrosine). Phe116 carries the post-translational modification Phenylalanine amide. Residues 120–128 (SAEEYEYSS) constitute a propeptide that is removed on maturation.

This sequence belongs to the gastrin/cholecystokinin family. In terms of processing, the precursor is cleaved by proteases to produce a number of active cholecystokinins. In terms of tissue distribution, brain and gastrointestinal tract.

It localises to the secreted. This Xenopus laevis (African clawed frog) protein is Cholecystokinin B (cck-b).